Here is a 125-residue protein sequence, read N- to C-terminus: Aspartate 1-decarboxylase 2 (125 aa).

Serine 25 (schiff-base intermediate with substrate; via pyruvic acid) is an active-site residue. The residue at position 25 (serine 25) is a Pyruvic acid (Ser). Threonine 57 provides a ligand contact to substrate. The active-site Proton donor is the tyrosine 58. 73-75 (GAA) contacts substrate.

The protein belongs to the PanD family. In terms of assembly, heterooctamer of four alpha and four beta subunits. Requires pyruvate as cofactor. Is synthesized initially as an inactive proenzyme, which is activated by self-cleavage at a specific serine bond to produce a beta-subunit with a hydroxyl group at its C-terminus and an alpha-subunit with a pyruvoyl group at its N-terminus.

The protein localises to the cytoplasm. The enzyme catalyses L-aspartate + H(+) = beta-alanine + CO2. The protein operates within cofactor biosynthesis; (R)-pantothenate biosynthesis; beta-alanine from L-aspartate: step 1/1. Functionally, catalyzes the pyruvoyl-dependent decarboxylation of aspartate to produce beta-alanine. In Gloeobacter violaceus (strain ATCC 29082 / PCC 7421), this protein is Aspartate 1-decarboxylase 2.